The sequence spans 507 residues: Carnosic acid synthase (507 aa).

The chain crosses the membrane as a helical span at residues 6–23; it reads VFSLAFLAAWFIVVFPRW. Cys450 lines the heme pocket.

This sequence belongs to the cytochrome P450 family. Requires heme as cofactor. In terms of tissue distribution, expressed in glandular trichomes of young leaves.

The protein localises to the membrane. The enzyme catalyses 11-hydroxyferruginol + 3 reduced [NADPH--hemoprotein reductase] + 3 O2 = carnosate + 3 oxidized [NADPH--hemoprotein reductase] + 4 H2O + 4 H(+). It carries out the reaction miltiradiene + 2 reduced [NADPH--hemoprotein reductase] + 2 O2 = miltiradien-20-al + 2 oxidized [NADPH--hemoprotein reductase] + 3 H2O + 2 H(+). It catalyses the reaction ferruginol + 3 reduced [NADPH--hemoprotein reductase] + 3 O2 = pisiferate + 3 oxidized [NADPH--hemoprotein reductase] + 4 H2O + 4 H(+). The protein operates within secondary metabolite biosynthesis; terpenoid biosynthesis. In terms of biological role, monooxygenase involved in the biosynthesis of carnosate, a potent antioxidant labdane-related diterpene natural product. Catalyzes the oxidation of 11-hydroxyferruginol to produce carnosate. Mediates the conversion of miltiradien into miltiradien-20-al. Also involved in the production of pisiferic acid and derivative products from ferruginol. In Rosmarinus officinalis (Rosemary), this protein is Carnosic acid synthase.